We begin with the raw amino-acid sequence, 1478 residues long: Serine/threonine-protein kinase BCK1/SLK1/SSP31 (1478 aa).

4 disordered regions span residues 1 to 70, 99 to 126, 217 to 359, and 373 to 427; these read MPFL…TSSQ, TSFT…GGNS, NVTN…RRHH, and FGSG…KGNL. Positions 29–49 are enriched in low complexity; that stretch reads PTSSVASTKSSSKSPRATSRK. 2 stretches are compositionally biased toward polar residues: residues 58 to 70 and 99 to 110; these read QFPN…TSSQ and TSFTNSSYKNDN. Positions 111–126 are enriched in low complexity; the sequence is GPSSLSDSRKSSGGNS. Residues 223–233 are compositionally biased toward basic residues; the sequence is IRQKSASKLKS. Composition is skewed to polar residues over residues 253–273 and 281–297; these read DISN…SGPS and LHST…SSLY. 2 stretches are compositionally biased toward low complexity: residues 298–320 and 342–353; these read RRSF…SPSN and SASPPASPSYPS. Composition is skewed to polar residues over residues 386-396 and 407-420; these read NPQGHSLSSEN and TNVS…SLPT. Threonine 407 carries the post-translational modification Phosphothreonine. Phosphoserine is present on residues serine 411 and serine 491. The disordered stretch occupies residues 644 to 671; that stretch reads KPKPAPLTSENNVPLKSVKSKSSMRSGT. The span at 659-671 shows a compositional bias: low complexity; that stretch reads KSVKSKSSMRSGT. Residue serine 747 is modified to Phosphoserine. Disordered stretches follow at residues 752 to 877, 895 to 939, 960 to 1021, and 1053 to 1116; these read LNLP…ASTH, KTDQ…RGNS, ADAP…TQDK, and TEGI…TPKR. Residues 765-777 are compositionally biased toward polar residues; sequence TPITENESKSSFQ. A compositionally biased stretch (basic and acidic residues) spans 779 to 809; that stretch reads LRKDEGTEIDFNHRRESPYTKPELAPKREAP. Over residues 813–827 the composition is skewed to polar residues; it reads ANTSPQRTLSTSKQN. Serine 816 carries the post-translational modification Phosphoserine. Low complexity-rich tracts occupy residues 851–870 and 914–925; these read QLLS…LTSS and NRSNSTVSTSNS. The span at 967-977 shows a compositional bias: acidic residues; sequence DSDDSDDDSSS. The segment covering 994–1011 has biased composition (basic and acidic residues); it reads NENKKDEKSDNSSTHSDE. 2 positions are modified to phosphoserine: serine 1058 and serine 1061. The segment covering 1058–1083 has biased composition (low complexity); the sequence is SPTSPKSLDSLLSPKNVASSRTEPST. Serine 1134 carries the phosphoserine; by PKC modification. Positions 1175–1440 constitute a Protein kinase domain; it reads WMKGEMIGKG…ANELLSHPFS (266 aa). ATP is bound by residues 1181–1189 and lysine 1204; that span reads IGKGSFGAV. Aspartate 1303 serves as the catalytic Proton acceptor.

The protein belongs to the protein kinase superfamily. STE Ser/Thr protein kinase family. MAP kinase kinase kinase subfamily.

The protein localises to the cytoplasm. It carries out the reaction L-seryl-[protein] + ATP = O-phospho-L-seryl-[protein] + ADP + H(+). The enzyme catalyses L-threonyl-[protein] + ATP = O-phospho-L-threonyl-[protein] + ADP + H(+). In terms of biological role, serine/threonine protein kinase involved in a signal transduction pathway that plays a role in yeast cell morphogenesis and cell growth. This pathway seems to start by SMP3; then involve the kinase PKC1 that may act on this kinase. BCK1 probably phosphorylates MKK1 and MKK2 which themselves phosphorylate the MPK1 kinase. This is Serine/threonine-protein kinase BCK1/SLK1/SSP31 (BCK1) from Saccharomyces cerevisiae (strain ATCC 204508 / S288c) (Baker's yeast).